Consider the following 360-residue polypeptide: 3-isopropylmalate dehydrogenase (360 aa).

Glycine 76–glutamate 89 lines the NAD(+) pocket. Substrate is bound by residues arginine 96, arginine 106, arginine 134, and aspartate 224. Mg(2+)-binding residues include aspartate 224, aspartate 248, and aspartate 252. Glycine 282–asparagine 294 provides a ligand contact to NAD(+).

It belongs to the isocitrate and isopropylmalate dehydrogenases family. LeuB type 1 subfamily. As to quaternary structure, homodimer. Requires Mg(2+) as cofactor. It depends on Mn(2+) as a cofactor.

It is found in the cytoplasm. It catalyses the reaction (2R,3S)-3-isopropylmalate + NAD(+) = 4-methyl-2-oxopentanoate + CO2 + NADH. Its pathway is amino-acid biosynthesis; L-leucine biosynthesis; L-leucine from 3-methyl-2-oxobutanoate: step 3/4. Catalyzes the oxidation of 3-carboxy-2-hydroxy-4-methylpentanoate (3-isopropylmalate) to 3-carboxy-4-methyl-2-oxopentanoate. The product decarboxylates to 4-methyl-2 oxopentanoate. The chain is 3-isopropylmalate dehydrogenase from Methylococcus capsulatus (strain ATCC 33009 / NCIMB 11132 / Bath).